The sequence spans 902 residues: Protein translocase subunit SecA (902 aa).

ATP-binding positions include Gln-87, 105–109 (GEGKT), and Asp-512. The disordered stretch occupies residues 850-902 (RLAKQQQLSHEVTKESQMSAVDGQVASGKKVGRNEPCPCGSGKKYKHCHGKLG). Positions 853–868 (KQQQLSHEVTKESQMS) are enriched in polar residues. Residues Cys-886, Cys-888, Cys-897, and His-898 each coordinate Zn(2+). A compositionally biased stretch (basic residues) spans 892–902 (KKYKHCHGKLG).

Belongs to the SecA family. As to quaternary structure, monomer and homodimer. Part of the essential Sec protein translocation apparatus which comprises SecA, SecYEG and auxiliary proteins SecDF-YajC and YidC. It depends on Zn(2+) as a cofactor.

The protein localises to the cell inner membrane. It is found in the cytoplasm. The catalysed reaction is ATP + H2O + cellular proteinSide 1 = ADP + phosphate + cellular proteinSide 2.. In terms of biological role, part of the Sec protein translocase complex. Interacts with the SecYEG preprotein conducting channel. Has a central role in coupling the hydrolysis of ATP to the transfer of proteins into and across the cell membrane, serving both as a receptor for the preprotein-SecB complex and as an ATP-driven molecular motor driving the stepwise translocation of polypeptide chains across the membrane. The protein is Protein translocase subunit SecA of Proteus mirabilis (strain HI4320).